The following is a 103-amino-acid chain: Small ribosomal subunit protein uS10 (103 aa).

The protein belongs to the universal ribosomal protein uS10 family. In terms of assembly, part of the 30S ribosomal subunit.

Its function is as follows. Involved in the binding of tRNA to the ribosomes. This Sphingopyxis alaskensis (strain DSM 13593 / LMG 18877 / RB2256) (Sphingomonas alaskensis) protein is Small ribosomal subunit protein uS10.